A 419-amino-acid chain; its full sequence is L-rhamnose isomerase (419 aa).

3 residues coordinate Mn(2+): histidine 262, aspartate 294, and aspartate 296.

Belongs to the rhamnose isomerase family. Homotetramer. It depends on Mn(2+) as a cofactor.

It localises to the cytoplasm. It carries out the reaction L-rhamnopyranose = L-rhamnulose. Its pathway is carbohydrate degradation; L-rhamnose degradation; glycerone phosphate from L-rhamnose: step 1/3. Functionally, catalyzes the interconversion of L-rhamnose and L-rhamnulose. The polypeptide is L-rhamnose isomerase (Salmonella typhimurium (strain LT2 / SGSC1412 / ATCC 700720)).